Consider the following 423-residue polypeptide: Lysosomal acid phosphatase (423 aa).

An N-terminal signal peptide occupies residues 1–30 (MAGKRSGWSRAALLQLLLGVNLVVMPPTQA). The Lumenal segment spans residues 31–380 (RSLRFVTLLY…QVASGPADTE (350 aa)). Histidine 42 (nucleophile) is an active-site residue. N-linked (GlcNAc...) asparagine glycosylation is found at asparagine 92, asparagine 133, asparagine 167, asparagine 177, asparagine 191, and asparagine 267. Disulfide bonds link cysteine 159/cysteine 370, cysteine 212/cysteine 310, and cysteine 345/cysteine 349. Residue aspartate 287 is the Proton donor of the active site. N-linked (GlcNAc...) asparagine glycosylation is found at asparagine 322 and asparagine 331. The helical transmembrane segment at 381–401 (VIVALAVCGSILFLLIVLLLT) threads the bilayer. The Cytoplasmic portion of the chain corresponds to 402–423 (VLFRMQAQPPGYRHVADGEDHA).

The protein belongs to the histidine acid phosphatase family. In terms of processing, the membrane-bound form is converted to the soluble form by sequential proteolytic processing. First, the C-terminal cytoplasmic tail is removed. Cleavage by a lysosomal protease releases the soluble form in the lysosome lumen.

It localises to the lysosome membrane. The protein resides in the lysosome lumen. The catalysed reaction is a phosphate monoester + H2O = an alcohol + phosphate. The chain is Lysosomal acid phosphatase (ACP2) from Pongo abelii (Sumatran orangutan).